We begin with the raw amino-acid sequence, 276 residues long: NADH-cytochrome b5 reductase 2 (276 aa).

The 113-residue stretch at 15–127 (EAKYPLPLIE…RGPTGRLFYN (113 aa)) folds into the FAD-binding FR-type domain. Position 17 is an N6-acetyllysine (lysine 17). A Phosphotyrosine modification is found at tyrosine 18. FAD is bound by residues 107–137 (ENMKIGDTILFRGPTGRLFYNEPGTLLIKAN) and 146–181 (LVHHLGMIAGGTGITPMLQLIRHITKDTSDETRMSL).

It belongs to the flavoprotein pyridine nucleotide cytochrome reductase family. The cofactor is FAD.

It catalyses the reaction 2 Fe(III)-[cytochrome b5] + NADH = 2 Fe(II)-[cytochrome b5] + NAD(+) + H(+). In terms of biological role, NADH-cytochrome b5 reductases are involved in desaturation and elongation of fatty acids, cholesterol biosynthesis, drug metabolism, and, in erythrocyte, methemoglobin reduction. Responsible for NADH-dependent lucigenin chemiluminescence in spermatozoa by reducing both lucigenin and 2-[4-iodophenyl]-3-[4-nitrophenyl]-5-[2,4-disulfophenyl]-2H tetrazolium monosodium salt (WST-1). This chain is NADH-cytochrome b5 reductase 2 (Cyb5r2), found in Mus musculus (Mouse).